The sequence spans 409 residues: Glucose-1-phosphate adenylyltransferase (409 aa).

Alpha-D-glucose 1-phosphate is bound by residues Gly168, 183–184 (EK), and Ser201.

Belongs to the bacterial/plant glucose-1-phosphate adenylyltransferase family. In terms of assembly, homotetramer.

It catalyses the reaction alpha-D-glucose 1-phosphate + ATP + H(+) = ADP-alpha-D-glucose + diphosphate. Its pathway is glycan biosynthesis; glycogen biosynthesis. Functionally, involved in the biosynthesis of ADP-glucose, a building block required for the elongation reactions to produce glycogen. Catalyzes the reaction between ATP and alpha-D-glucose 1-phosphate (G1P) to produce pyrophosphate and ADP-Glc. This Corynebacterium efficiens (strain DSM 44549 / YS-314 / AJ 12310 / JCM 11189 / NBRC 100395) protein is Glucose-1-phosphate adenylyltransferase.